The following is a 358-amino-acid chain: Biotin synthase (358 aa).

Residues 44 to 272 enclose the Radical SAM core domain; that stretch reads NRVRLNYLVN…DSEVRAAAGR (229 aa). [4Fe-4S] cluster is bound by residues cysteine 59, cysteine 63, and cysteine 66. [2Fe-2S] cluster contacts are provided by cysteine 103, cysteine 136, cysteine 196, and arginine 267.

It belongs to the radical SAM superfamily. Biotin synthase family. As to quaternary structure, homodimer. [4Fe-4S] cluster serves as cofactor. [2Fe-2S] cluster is required as a cofactor.

It catalyses the reaction (4R,5S)-dethiobiotin + (sulfur carrier)-SH + 2 reduced [2Fe-2S]-[ferredoxin] + 2 S-adenosyl-L-methionine = (sulfur carrier)-H + biotin + 2 5'-deoxyadenosine + 2 L-methionine + 2 oxidized [2Fe-2S]-[ferredoxin]. Its pathway is cofactor biosynthesis; biotin biosynthesis; biotin from 7,8-diaminononanoate: step 2/2. In terms of biological role, catalyzes the conversion of dethiobiotin (DTB) to biotin by the insertion of a sulfur atom into dethiobiotin via a radical-based mechanism. This is Biotin synthase from Cutibacterium acnes (strain DSM 16379 / KPA171202) (Propionibacterium acnes).